Consider the following 247-residue polypeptide: Carboxy-S-adenosyl-L-methionine synthase (247 aa).

S-adenosyl-L-methionine is bound by residues Y39, 64–66 (GCS), 89–90 (DN), 117–118 (DI), N132, and R199.

The protein belongs to the class I-like SAM-binding methyltransferase superfamily. Cx-SAM synthase family. As to quaternary structure, homodimer.

The catalysed reaction is prephenate + S-adenosyl-L-methionine = carboxy-S-adenosyl-L-methionine + 3-phenylpyruvate + H2O. In terms of biological role, catalyzes the conversion of S-adenosyl-L-methionine (SAM) to carboxy-S-adenosyl-L-methionine (Cx-SAM). The chain is Carboxy-S-adenosyl-L-methionine synthase from Escherichia coli O17:K52:H18 (strain UMN026 / ExPEC).